We begin with the raw amino-acid sequence, 131 residues long: Large ribosomal subunit protein eL32 (131 aa).

It belongs to the eukaryotic ribosomal protein eL32 family. Component of the large ribosomal subunit. Mature ribosomes consist of a small (40S) and a large (60S) subunit. The 40S subunit contains about 32 different proteins and 1 molecule of RNA (18S). The 60S subunit contains 45 different proteins and 3 molecules of RNA (25S, 5.8S and 5S).

The protein localises to the cytoplasm. Its function is as follows. Component of the ribosome, a large ribonucleoprotein complex responsible for the synthesis of proteins in the cell. The small ribosomal subunit (SSU) binds messenger RNAs (mRNAs) and translates the encoded message by selecting cognate aminoacyl-transfer RNA (tRNA) molecules. The large subunit (LSU) contains the ribosomal catalytic site termed the peptidyl transferase center (PTC), which catalyzes the formation of peptide bonds, thereby polymerizing the amino acids delivered by tRNAs into a polypeptide chain. The nascent polypeptides leave the ribosome through a tunnel in the LSU and interact with protein factors that function in enzymatic processing, targeting, and the membrane insertion of nascent chains at the exit of the ribosomal tunnel. In Candida albicans (strain SC5314 / ATCC MYA-2876) (Yeast), this protein is Large ribosomal subunit protein eL32.